Consider the following 487-residue polypeptide: GPI mannosyltransferase 1 (487 aa).

3 helical membrane-spanning segments follow: residues 26–46 (PLPLYVSAFLLRIVLLLYGLW), 87–107 (ILAWLLLPTTWTAGAQWGPWA), and 121–141 (VLFAAADLVAGWLIEQVLVMG). The disordered stretch occupies residues 147 to 175 (SAAKGKEKDTEKTKEGGKKGPSVTASTGM). Basic and acidic residues predominate over residues 150 to 164 (KGKEKDTEKTKEGGK). The next 7 helical transmembrane spans lie at 205 to 225 (LLGVLVMALLWAVLSRRITLA), 227 to 247 (LLLGFSVHFKIYPFIYAPAIV), 289 to 309 (LLLAFTSLATFLSLNFLMYRL), 359 to 379 (IESLAFLPQLVLSTILIPLTL), 393 to 413 (FAFVTFNKVCTSQYFLWYLVL), 429 to 449 (MGLVALGLWVLGQALWLQQAY), and 462 to 482 (GLWMASLGFFVVNCWILGVIV).

It belongs to the PIGM family.

It is found in the endoplasmic reticulum membrane. It participates in glycolipid biosynthesis; glycosylphosphatidylinositol-anchor biosynthesis. Mannosyltransferase involved in glycosylphosphatidylinositol-anchor biosynthesis. Transfers the first alpha-1,4-mannose to GlcN-acyl-PI during GPI precursor assembly. Required for cell wall integrity. The protein is GPI mannosyltransferase 1 (gim-1) of Neurospora crassa (strain ATCC 24698 / 74-OR23-1A / CBS 708.71 / DSM 1257 / FGSC 987).